The sequence spans 301 residues: Mitochondrial carnitine/acylcarnitine carrier protein (301 aa).

Residue Ala-2 is modified to N-acetylalanine. Residues 2 to 12 (ADQPKPISPLK) are Cytoplasmic-facing. Solcar repeat units lie at residues 8–99 (ISPL…GKKL), 108–196 (LSYP…VKNI), and 207–293 (LSVP…AMKF). Residues 13 to 31 (NLLAGGFGGVCLVFVGHPL) traverse the membrane as a helical segment. The Mitochondrial matrix portion of the chain corresponds to 32–73 (DTVKVRLQTQPPSLPGQPPMYSGTFDCFRKTLFREGIRGLYR). The helical transmembrane segment at 74 to 93 (GMAAPIIGVTPMFAVCFFGF) threads the bilayer. The Cytoplasmic segment spans residues 94–112 (GLGKKLQQKHPEDVLSYPQ). Residues 113–131 (LFAAGMLSGIFTTGIMTPG) form a helical membrane-spanning segment. Topologically, residues 132–170 (ERIKCLLQIQASSGETKYTGTLDCAKKLYQEFGIRGIYK) are mitochondrial matrix. N6-acetyllysine occurs at positions 148 and 157. The residue at position 170 (Lys-170) is an N6-acetyllysine; alternate. An N6-succinyllysine; alternate modification is found at Lys-170. A helical transmembrane segment spans residues 171–190 (GTVVTLMRDVPASGMYFMTY). Over 191-211 (EWVKNIFTPEGKRVSELSVPR) the chain is Cytoplasmic. A helical membrane pass occupies residues 212-230 (VLVAGGIAGIFNWAVAIPP). Topologically, residues 231-267 (DVLKSRFQTAPPGKYPNGFRDVLRELIPDEGVTSLYK) are mitochondrial matrix. Residues 268–287 (GFNAVMIRAFPANAACFLGF) traverse the membrane as a helical segment. The Cytoplasmic portion of the chain corresponds to 288–301 (EVAMKFLNWATPNL).

Belongs to the mitochondrial carrier (TC 2.A.29) family.

It is found in the mitochondrion inner membrane. It catalyses the reaction O-acetyl-(R)-carnitine(in) + (R)-carnitine(out) = O-acetyl-(R)-carnitine(out) + (R)-carnitine(in). It carries out the reaction an O-acyl-(R)-carnitine(in) + (R)-carnitine(out) = an O-acyl-(R)-carnitine(out) + (R)-carnitine(in). The catalysed reaction is O-propanoyl-(R)-carnitine(in) + (R)-carnitine(out) = O-propanoyl-(R)-carnitine(out) + (R)-carnitine(in). The enzyme catalyses O-hexadecanoyl-(R)-carnitine(in) + (R)-carnitine(out) = O-hexadecanoyl-(R)-carnitine(out) + (R)-carnitine(in). It catalyses the reaction O-octanoyl-(R)-carnitine(in) + (R)-carnitine(out) = O-octanoyl-(R)-carnitine(out) + (R)-carnitine(in). It carries out the reaction (R)-carnitine(in) = (R)-carnitine(out). In terms of biological role, mediates the electroneutral exchange of acylcarnitines (O-acyl-(R)-carnitine or L-acylcarnitine) of different acyl chain lengths (ranging from O-acetyl-(R)-carnitine to long-chain O-acyl-(R)-carnitines) with free carnitine ((R)-carnitine or L-carnitine) across the mitochondrial inner membrane, via a ping-pong mechanism. Key player in the mitochondrial oxidation pathway, it translocates the fatty acids in the form of acylcarnitines into the mitochondrial matrix, where the carnitine palmitoyltransferase 2 (CPT-2) activates them to undergo fatty acid beta-oxidation. Catalyzes the unidirectional transport (uniport) of carnitine at lower rates than the antiport (exchange). The chain is Mitochondrial carnitine/acylcarnitine carrier protein (SLC25A20) from Macaca fascicularis (Crab-eating macaque).